Reading from the N-terminus, the 150-residue chain is 3-hydroxyacyl-[acyl-carrier-protein] dehydratase FabZ (150 aa).

His54 is an active-site residue.

The protein belongs to the thioester dehydratase family. FabZ subfamily.

Its subcellular location is the cytoplasm. It catalyses the reaction a (3R)-hydroxyacyl-[ACP] = a (2E)-enoyl-[ACP] + H2O. Its function is as follows. Involved in unsaturated fatty acids biosynthesis. Catalyzes the dehydration of short chain beta-hydroxyacyl-ACPs and long chain saturated and unsaturated beta-hydroxyacyl-ACPs. The polypeptide is 3-hydroxyacyl-[acyl-carrier-protein] dehydratase FabZ (Pseudoalteromonas translucida (strain TAC 125)).